The sequence spans 129 residues: Holo-[acyl-carrier-protein] synthase (129 aa).

Residues Asp-8 and Glu-58 each contribute to the Mg(2+) site.

The protein belongs to the P-Pant transferase superfamily. AcpS family. Requires Mg(2+) as cofactor.

The protein resides in the cytoplasm. It carries out the reaction apo-[ACP] + CoA = holo-[ACP] + adenosine 3',5'-bisphosphate + H(+). Its function is as follows. Transfers the 4'-phosphopantetheine moiety from coenzyme A to a Ser of acyl-carrier-protein. In Acidithiobacillus ferrooxidans (strain ATCC 53993 / BNL-5-31) (Leptospirillum ferrooxidans (ATCC 53993)), this protein is Holo-[acyl-carrier-protein] synthase.